We begin with the raw amino-acid sequence, 282 residues long: Protease HtpX homolog (282 aa).

The next 2 membrane-spanning stretches (helical) occupy residues 7–26 (TTVL…GAVG) and 30–49 (GMMI…YWFS). H131 is a binding site for Zn(2+). E132 is an active-site residue. H135 provides a ligand contact to Zn(2+). Transmembrane regions (helical) follow at residues 141–161 (ILVS…ARMA) and 183–203 (LGLV…QLAI). Residue E208 coordinates Zn(2+).

The protein belongs to the peptidase M48B family. Requires Zn(2+) as cofactor.

The protein localises to the cell inner membrane. In Syntrophobacter fumaroxidans (strain DSM 10017 / MPOB), this protein is Protease HtpX homolog.